A 330-amino-acid chain; its full sequence is 7,8-didemethyl-8-hydroxy-5-deazariboflavin synthase (330 aa).

The Radical SAM core domain occupies 13-253 (VTFSKNAFIP…EDISIQVPPN (241 aa)). [4Fe-4S] cluster contacts are provided by C27, C31, and C34.

It belongs to the radical SAM superfamily. CofG family. As to quaternary structure, consists of two subunits, CofG and CofH. [4Fe-4S] cluster is required as a cofactor.

It carries out the reaction 5-amino-5-(4-hydroxybenzyl)-6-(D-ribitylimino)-5,6-dihydrouracil + S-adenosyl-L-methionine = 7,8-didemethyl-8-hydroxy-5-deazariboflavin + 5'-deoxyadenosine + L-methionine + NH4(+) + H(+). It participates in cofactor biosynthesis; coenzyme F0 biosynthesis. Its function is as follows. Catalyzes the radical-mediated synthesis of 7,8-didemethyl-8-hydroxy-5-deazariboflavin from 5-amino-5-(4-hydroxybenzyl)-6-(D-ribitylimino)-5,6-dihydrouracil. The chain is 7,8-didemethyl-8-hydroxy-5-deazariboflavin synthase from Methanococcus maripaludis (strain DSM 14266 / JCM 13030 / NBRC 101832 / S2 / LL).